Consider the following 283-residue polypeptide: 4-hydroxy-3-methylbut-2-enyl diphosphate reductase (283 aa).

Cys-12 contacts [4Fe-4S] cluster. The (2E)-4-hydroxy-3-methylbut-2-enyl diphosphate site is built by His-40 and His-72. 2 residues coordinate dimethylallyl diphosphate: His-40 and His-72. Isopentenyl diphosphate is bound by residues His-40 and His-72. Cys-94 lines the [4Fe-4S] cluster pocket. His-122 contacts (2E)-4-hydroxy-3-methylbut-2-enyl diphosphate. Dimethylallyl diphosphate is bound at residue His-122. His-122 is an isopentenyl diphosphate binding site. Glu-124 serves as the catalytic Proton donor. Residue Thr-160 participates in (2E)-4-hydroxy-3-methylbut-2-enyl diphosphate binding. Cys-188 is a binding site for [4Fe-4S] cluster. Residues Ser-216, Asn-218, and Ser-259 each coordinate (2E)-4-hydroxy-3-methylbut-2-enyl diphosphate. 3 residues coordinate dimethylallyl diphosphate: Ser-216, Asn-218, and Ser-259. Residues Ser-216, Asn-218, and Ser-259 each contribute to the isopentenyl diphosphate site.

It belongs to the IspH family. Requires [4Fe-4S] cluster as cofactor.

It catalyses the reaction isopentenyl diphosphate + 2 oxidized [2Fe-2S]-[ferredoxin] + H2O = (2E)-4-hydroxy-3-methylbut-2-enyl diphosphate + 2 reduced [2Fe-2S]-[ferredoxin] + 2 H(+). It carries out the reaction dimethylallyl diphosphate + 2 oxidized [2Fe-2S]-[ferredoxin] + H2O = (2E)-4-hydroxy-3-methylbut-2-enyl diphosphate + 2 reduced [2Fe-2S]-[ferredoxin] + 2 H(+). It functions in the pathway isoprenoid biosynthesis; dimethylallyl diphosphate biosynthesis; dimethylallyl diphosphate from (2E)-4-hydroxy-3-methylbutenyl diphosphate: step 1/1. The protein operates within isoprenoid biosynthesis; isopentenyl diphosphate biosynthesis via DXP pathway; isopentenyl diphosphate from 1-deoxy-D-xylulose 5-phosphate: step 6/6. In terms of biological role, catalyzes the conversion of 1-hydroxy-2-methyl-2-(E)-butenyl 4-diphosphate (HMBPP) into a mixture of isopentenyl diphosphate (IPP) and dimethylallyl diphosphate (DMAPP). Acts in the terminal step of the DOXP/MEP pathway for isoprenoid precursor biosynthesis. This chain is 4-hydroxy-3-methylbut-2-enyl diphosphate reductase, found in Dictyoglomus turgidum (strain DSM 6724 / Z-1310).